Here is a 314-residue protein sequence, read N- to C-terminus: Ribosomal protein L11 methyltransferase (314 aa).

Residues threonine 161, glycine 182, aspartate 204, and asparagine 248 each contribute to the S-adenosyl-L-methionine site.

The protein belongs to the methyltransferase superfamily. PrmA family.

Its subcellular location is the cytoplasm. The catalysed reaction is L-lysyl-[protein] + 3 S-adenosyl-L-methionine = N(6),N(6),N(6)-trimethyl-L-lysyl-[protein] + 3 S-adenosyl-L-homocysteine + 3 H(+). Methylates ribosomal protein L11. This Listeria monocytogenes serotype 4b (strain CLIP80459) protein is Ribosomal protein L11 methyltransferase.